A 400-amino-acid chain; its full sequence is Methylthioribose kinase (400 aa).

Residues N44, K61, and 115–117 (EDL) contribute to the ATP site. D233 is a binding site for substrate. Residue 250–252 (DPE) participates in ATP binding. Residue R340 participates in substrate binding.

This sequence belongs to the methylthioribose kinase family. Homodimer.

It carries out the reaction 5-(methylsulfanyl)-D-ribose + ATP = 5-(methylsulfanyl)-alpha-D-ribose 1-phosphate + ADP + H(+). The protein operates within amino-acid biosynthesis; L-methionine biosynthesis via salvage pathway; S-methyl-5-thio-alpha-D-ribose 1-phosphate from S-methyl-5'-thioadenosine (hydrolase route): step 2/2. In terms of biological role, catalyzes the phosphorylation of methylthioribose into methylthioribose-1-phosphate. The protein is Methylthioribose kinase of Geobacillus sp. (strain WCH70).